The primary structure comprises 576 residues: MAGUK p55 subfamily member 7 (576 aa).

2 consecutive L27 domains span residues 10 to 64 and 65 to 122; these read SEMG…EDCA and PTPV…YDPE. A PDZ domain is found at 139-220; sequence IIRLVKNKEP…AITFKVVPGI (82 aa). One can recognise an SH3 domain in the interval 228 to 298; it reads EPKMFIKALF…PSKHFQERRL (71 aa). In terms of domain architecture, Guanylate kinase-like spans 368–560; sequence HRLVVLVGPT…AFSELKQALK (193 aa).

This sequence belongs to the MAGUK family.

Its subcellular location is the membrane. The protein resides in the cell junction. It is found in the tight junction. The protein localises to the adherens junction. Functionally, acts as an important adapter that promotes epithelial cell polarity and tight junction formation. Involved in the assembly of protein complexes at sites of cell-cell contact. This is MAGUK p55 subfamily member 7 (mpp7) from Danio rerio (Zebrafish).